The primary structure comprises 190 residues: Proline-rich protein 3 (190 aa).

Disordered stretches follow at residues 1-94 (MPKR…GLGP), 110-130 (PPFP…KEAR), and 142-161 (KNTY…SDRP). Over residues 37–48 (MGPPSLLGPPPM) the composition is skewed to pro residues. Residues 157–185 (KSDRPVCRHFSKKGHCRYEDHCAFYHPGV) form a C3H1-type zinc finger.

The polypeptide is Proline-rich protein 3 (Prr3) (Mus musculus (Mouse)).